A 369-amino-acid polypeptide reads, in one-letter code: Dual specificity protein phosphatase 1-A (369 aa).

Residues 21-138 (RAHKCLILDC…FSAQCPEFCT (118 aa)) enclose the Rhodanese domain. Thr-168 carries the phosphothreonine; by MAPK1 modification. The 142-residue stretch at 175-316 (GPVEILPFLY…LLQFESQVLA (142 aa)) folds into the Tyrosine-protein phosphatase domain. The active-site Phosphocysteine intermediate is Cys-260.

It belongs to the protein-tyrosine phosphatase family. Non-receptor class dual specificity subfamily. Post-translationally, phosphorylated by MAPK1/ERK2 at Thr-168 and at one or more serine residues in a progesterone-dependent manner. Phosphorylation reduces its rate of degradation but does not seem to affect phosphatase activity. Expressed in XIK-2 kidney cells.

Its subcellular location is the nucleus. The catalysed reaction is O-phospho-L-seryl-[protein] + H2O = L-seryl-[protein] + phosphate. It catalyses the reaction O-phospho-L-threonyl-[protein] + H2O = L-threonyl-[protein] + phosphate. It carries out the reaction O-phospho-L-tyrosyl-[protein] + H2O = L-tyrosyl-[protein] + phosphate. In terms of biological role, dual specificity phosphatase that dephosphorylates MAP kinase MAPK1/ERK2 on both 'Thr-188' and 'Tyr-190', regulating its activity during the meiotic cell cycle. The polypeptide is Dual specificity protein phosphatase 1-A (Xenopus laevis (African clawed frog)).